We begin with the raw amino-acid sequence, 304 residues long: Acetylglutamate kinase (304 aa).

Residues 82 to 83, Arg104, and Asn197 each bind substrate; that span reads GG.

Belongs to the acetylglutamate kinase family. ArgB subfamily.

Its subcellular location is the cytoplasm. It carries out the reaction N-acetyl-L-glutamate + ATP = N-acetyl-L-glutamyl 5-phosphate + ADP. Its pathway is amino-acid biosynthesis; L-arginine biosynthesis; N(2)-acetyl-L-ornithine from L-glutamate: step 2/4. In terms of biological role, catalyzes the ATP-dependent phosphorylation of N-acetyl-L-glutamate. The chain is Acetylglutamate kinase from Prochlorococcus marinus (strain NATL1A).